The sequence spans 735 residues: Exocyst complex component 7 (735 aa).

Coiled coils occupy residues 5-42 and 63-85; these read QEAS…TKNM and VHKQ…SCLD. The residue at position 133 (serine 133) is a Phosphoserine. The tract at residues 239-268 is disordered; that stretch reads HKSSSSSGVPYSPAIPNKRKDTPTKKPVKR.

Belongs to the EXO70 family. In terms of assembly, the exocyst complex is composed of EXOC1, EXOC2, EXOC3, EXOC4, EXOC5, EXOC6, EXOC7 and EXOC8. Interacts with ARHQ in a GTP-dependent manner. Interacts with RAB11FIP3. As to expression, abundant in the ventricular zone, the outer subventricular zone and the cortical plate of the fetal cortex.

Its subcellular location is the cytoplasm. The protein localises to the cytosol. It is found in the cell membrane. The protein resides in the midbody. It localises to the midbody ring. Functionally, component of the exocyst complex involved in the docking of exocytic vesicles with fusion sites on the plasma membrane. In adipocytes, plays a crucial role in targeting SLC2A4 vesicle to the plasma membrane in response to insulin, perhaps directing the vesicle to the precise site of fusion. It is required for neuron survival and plays an essential role in cortical development. The sequence is that of Exocyst complex component 7 (EXOC7) from Homo sapiens (Human).